The following is a 177-amino-acid chain: Large ribosomal subunit protein uL10 (177 aa).

This sequence belongs to the universal ribosomal protein uL10 family. Part of the ribosomal stalk of the 50S ribosomal subunit. The N-terminus interacts with L11 and the large rRNA to form the base of the stalk. The C-terminus forms an elongated spine to which L12 dimers bind in a sequential fashion forming a multimeric L10(L12)X complex.

Functionally, forms part of the ribosomal stalk, playing a central role in the interaction of the ribosome with GTP-bound translation factors. The polypeptide is Large ribosomal subunit protein uL10 (Kocuria rhizophila (strain ATCC 9341 / DSM 348 / NBRC 103217 / DC2201)).